Here is a 315-residue protein sequence, read N- to C-terminus: Pantothenate kinase (315 aa).

Residue 94-101 (GSVAVGKS) coordinates ATP.

It belongs to the prokaryotic pantothenate kinase family.

Its subcellular location is the cytoplasm. It catalyses the reaction (R)-pantothenate + ATP = (R)-4'-phosphopantothenate + ADP + H(+). It functions in the pathway cofactor biosynthesis; coenzyme A biosynthesis; CoA from (R)-pantothenate: step 1/5. The protein is Pantothenate kinase of Shewanella amazonensis (strain ATCC BAA-1098 / SB2B).